The following is a 485-amino-acid chain: Glycinin G2 (485 aa).

Residues methionine 1–alanine 18 form the signal peptide. Cystine bridges form between cysteine 28-cysteine 61 and cysteine 104-cysteine 307. The 206-residue stretch at leucine 33–arginine 238 folds into the Cupin type-1 1 domain. Positions tyrosine 108–glycine 118 are enriched in polar residues. 3 disordered regions span residues tyrosine 108 to valine 130, tyrosine 192 to serine 215, and threonine 262 to serine 298. The span at tyrosine 192–glycine 205 shows a compositional bias: low complexity. The segment covering glutamate 272–glutamine 281 has biased composition (acidic residues). Residues arginine 297–asparagine 300 constitute a propeptide that is removed on maturation. In terms of domain architecture, Cupin type-1 2 spans glutamine 313–arginine 462. The short motif at proline 476–alanine 485 is the Vacuolar targeting signal element. A propeptide spanning residues arginine 481–alanine 485 is cleaved from the precursor.

It belongs to the 11S seed storage protein (globulins) family. As to quaternary structure, hexamer; each subunit is composed of an acidic and a basic chain derived from a single precursor and linked by a disulfide bond. In terms of processing, during soybean germination, seed storage proteins are hydrolyzed by protease/26S proteasome. In terms of tissue distribution, exclusively in seeds during embryogenesis.

It localises to the endoplasmic reticulum. Its subcellular location is the protein storage vacuole. In terms of biological role, glycinin is the major seed storage protein of soybean. Glycinin basic peptides (GBPs), and, to a lower extent, glycinin exhibit antibacterial activity against Gram-negative and Gram-positive bacteria (e.g. L.monocytogenes, B.subtilis, E.coli and S.enteritidis) by forming pores and aggregating in transmembranes, leading to membrane permeability and, eventually, cell death. The polypeptide is Glycinin G2 (Glycine max (Soybean)).